The chain runs to 440 residues: Transposon Ty1-NL1 Gag polyprotein (440 aa).

Composition is skewed to polar residues over residues 1–23 (MESQ…SVTS), 48–60 (TKAN…TPAS), 71–86 (SPQT…GPYQ), and 131–152 (PQYP…GNTF). Disordered stretches follow at residues 1 to 86 (MESQ…GPYQ), 131 to 171 (PQYP…YVRP), and 350 to 425 (QQES…TEPI). The span at 153–165 (TDSSSADSDMTST) shows a compositional bias: low complexity. The segment at 299–401 (NNGIPINNKV…NSQSRTARAH (103 aa)) is RNA-binding. Residues 363–372 (NPSDEKKDSR) are compositionally biased toward basic and acidic residues. Over residues 373-412 (TYTNTTKPKSITRNSQKPNNSQSRTARAHNVSTSNNSSGP) the composition is skewed to polar residues.

Homotrimer.

It localises to the cytoplasm. Its function is as follows. Capsid protein (CA) is the structural component of the virus-like particle (VLP), forming the shell that encapsulates the retrotransposons dimeric RNA genome. The particles are assembled from trimer-clustered units and there are holes in the capsid shells that allow for the diffusion of macromolecules. CA also has nucleocapsid-like chaperone activity, promoting primer tRNA(i)-Met annealing to the multipartite primer-binding site (PBS), dimerization of Ty1 RNA and initiation of reverse transcription. The polypeptide is Transposon Ty1-NL1 Gag polyprotein (TY1A-NL1) (Saccharomyces cerevisiae (strain ATCC 204508 / S288c) (Baker's yeast)).